The chain runs to 302 residues: Stanniocalcin-2 (302 aa).

The N-terminal stretch at 1–24 is a signal peptide; the sequence is MCAERLGQFMTLALVLATFDPARG. Residues 23–44 form a disordered region; it reads RGTDATNPPEGPQDRSPQQKGR. 2 N-linked (GlcNAc...) asparagine glycosylation sites follow: N73 and N74. Residues 217–302 are disordered; it reads RPPTAPPERQ…EQSEYSDIRR (86 aa). Residues 227–264 are compositionally biased toward basic and acidic residues; sequence PQVDRTKLSRAHHGEAGHHLPEPSSRETGRGAKGERGS. A phosphoserine mark is found at S250 and S251. Position 254 is a phosphothreonine (T254).

The protein belongs to the stanniocalcin family. In terms of assembly, homodimer; disulfide-linked.

The protein localises to the secreted. Functionally, has an anti-hypocalcemic action on calcium and phosphate homeostasis. In Pongo abelii (Sumatran orangutan), this protein is Stanniocalcin-2 (STC2).